The chain runs to 176 residues: Dual-action ribosomal maturation protein DarP (176 aa).

A compositionally biased stretch (acidic residues) spans methionine 1–serine 16. A disordered region spans residues methionine 1–glutamate 29.

This sequence belongs to the DarP family.

The protein resides in the cytoplasm. Member of a network of 50S ribosomal subunit biogenesis factors which assembles along the 30S-50S interface, preventing incorrect 23S rRNA structures from forming. Promotes peptidyl transferase center (PTC) maturation. The chain is Dual-action ribosomal maturation protein DarP from Thiobacillus denitrificans (strain ATCC 25259 / T1).